The sequence spans 589 residues: Cell fusion protein aff-1 (589 aa).

The first 20 residues, 1–20, serve as a signal peptide directing secretion; it reads MRLWQWSIAVAICLVMVTEA. The Extracellular portion of the chain corresponds to 21–537; that stretch reads RLRRHHRKRR…MAHGGDFTEW (517 aa). 7 N-linked (GlcNAc...) asparagine glycosylation sites follow: N58, N138, N205, N335, N382, N392, and N408. The helical transmembrane segment at 538–558 threads the bilayer; it reads LKIGIHIVIAVGLLLLLILLF. Topologically, residues 559–589 are cytoplasmic; the sequence is TKCLVPLACCSLSIPFKNRNKKKKKKNSSDY.

This sequence belongs to the EFF/AFF cell fusogen family. Expressed in amphid sheath cells.

The protein localises to the cell membrane. It is found in the apical cell membrane. In terms of biological role, required for cell fusion events during development including the fusion of anchor cells (AC), vulval A and vulval D rings, and late epidermal seam cells. Required for amphid sheath cell fusion induced by entry into dauer stage. This chain is Cell fusion protein aff-1, found in Caenorhabditis elegans.